The sequence spans 508 residues: Anaerobic nitric oxide reductase transcription regulator NorR (508 aa).

Asp56 carries the 4-aspartylphosphate modification. The 230-residue stretch at 186 to 415 folds into the Sigma-54 factor interaction domain; that stretch reads MIGQSPAMAR…LEHAIHRAAV (230 aa). ATP-binding positions include 214-221 and 277-286; these read GETGVGKE and ADQGTLFLDE. Positions 483–502 form a DNA-binding region, H-T-H motif; it reads WAATARALELDSGNLHRLAK.

The protein operates within nitrogen metabolism; nitric oxide reduction. In terms of biological role, required for the expression of anaerobic nitric oxide (NO) reductase, acts as a transcriptional activator for at least the norVW operon. Activation also requires sigma-54. This is Anaerobic nitric oxide reductase transcription regulator NorR from Aeromonas hydrophila subsp. hydrophila (strain ATCC 7966 / DSM 30187 / BCRC 13018 / CCUG 14551 / JCM 1027 / KCTC 2358 / NCIMB 9240 / NCTC 8049).